The chain runs to 915 residues: Nitrate reductase [NADH] (915 aa).

Positions 1 to 102 (MAASVEPRQP…PRDEGTADAW (102 aa)) are disordered. Residues 16–26 (APATAPTARAP) show a composition bias toward low complexity. A compositionally biased stretch (acidic residues) spans 57-71 (AEEEEDDDDEDDEGH). Basic and acidic residues predominate over residues 88-97 (PSTRDPRDEG). Cysteine 189 serves as a coordination point for Mo-molybdopterin. The Cytochrome b5 heme-binding domain occupies 538 to 613 (DKQFTMSEVR…LDTYRIGELI (76 aa)). 2 residues coordinate heme: histidine 573 and histidine 596. The region spanning 654 to 767 (REKVPCRLVD…KGPLGHVEYT (114 aa)) is the FAD-binding FR-type domain. FAD-binding positions include 706–709 (RAYT), 723–727 (LVKVY), phenylalanine 728, phenylalanine 735, 740–742 (LMT), serine 791, and threonine 794.

It belongs to the nitrate reductase family. In terms of assembly, homodimer. The cofactor is FAD. It depends on heme as a cofactor. Mo-molybdopterin is required as a cofactor.

The enzyme catalyses nitrite + NAD(+) + H2O = nitrate + NADH + H(+). In terms of biological role, nitrate reductase is a key enzyme involved in the first step of nitrate assimilation in plants, fungi and bacteria. The chain is Nitrate reductase [NADH] from Hordeum vulgare (Barley).